The primary structure comprises 125 residues: Small ribosomal subunit protein uS13 (125 aa).

Residues 95–125 (GLPVNGQRTRTNARTRKGGKKTVANKKKVTK) are disordered. The span at 105-125 (TNARTRKGGKKTVANKKKVTK) shows a compositional bias: basic residues.

This sequence belongs to the universal ribosomal protein uS13 family. As to quaternary structure, part of the 30S ribosomal subunit. Forms a loose heterodimer with protein S19. Forms two bridges to the 50S subunit in the 70S ribosome.

Its function is as follows. Located at the top of the head of the 30S subunit, it contacts several helices of the 16S rRNA. In the 70S ribosome it contacts the 23S rRNA (bridge B1a) and protein L5 of the 50S subunit (bridge B1b), connecting the 2 subunits; these bridges are implicated in subunit movement. Contacts the tRNAs in the A and P-sites. This chain is Small ribosomal subunit protein uS13, found in Leptospira borgpetersenii serovar Hardjo-bovis (strain L550).